A 221-amino-acid chain; its full sequence is Putative efflux system component YhbJ (221 aa).

The chain crosses the membrane as a helical span at residues 17–37 (LILTNIIGLIVVLAIIAGGAY).

The protein belongs to the membrane fusion protein (MFP) (TC 8.A.1) family.

The protein localises to the cell membrane. The polypeptide is Putative efflux system component YhbJ (yhbJ) (Bacillus subtilis (strain 168)).